The chain runs to 833 residues: MEGAGSRGAGPARRQGARGLGLLLLLWLLPGLAAPQDLNPRGRNVCRTPGSQVLTCCAGWRQLGDECGIAVCEGNSTCSENEVCVRPGECRCRHGYFGANCDTKCPRQFWGPDCKERCSCHPHGQCEDVTGQCTCHARRWGARCEHACQCQHGTCHPRSGACRCEPGWWGAQCASACYCSATSRCDPQTGACLCHVGWWGRSCNNQCACNSSPCEQQSGRCQCRERMFGARCDRYCQCSHGRCHPVDGTCACDPGYRGKYCREPCPAGFYGPGCRRRCGQCKGQQPCTVVEGRCLTCEPGWNGTKCDQPCATGFYGEGCGHRCPPCRDGHACNHVTGKCTHCNAGWIGDRCETKCSNGTYGEDCAFVCSDCGSGHCDFQSGRCLCSPGVHGPHCNVTCPAGLHGVDCAQACSCHEESCDPVTGACHLETNQRKGVMGAGALLTLLLGLLLSLLGCCCACRGKDSARRELTLGRKKAPQRFCGSFSRISMKLPRIPLRRQKLPKVVVAHHDLDNTLNCSFLDPPSGLEQPSPSWSSRASFSSFDTTDEGPVYCVPHEEATADSRDLEATAALTEVAAVSLEPTGTSTPGEEAAVLPASSDSERSASSVEGPSGALYARVARREARPARTRNEAGGLSLSPSPERRKPPPPDPATKPKVSWIHGKHSAAAAAPSPPPAGRKAAPSPSGRKRTPSNSSVQPPGLTEEAPGPASPTPPRARARGRGLGLSEPTDAGGPPRSAPEAASMLAAELRDKTRSLGRAEKPPPPQKAKRSVLPAATVRTASASEASGSEKAAASAPAPETPRKKTPIQKPPRKKSREAAGEPSRAGTAPGAS.

The N-terminal stretch at 1 to 33 (MEGAGSRGAGPARRQGARGLGLLLLLWLLPGLA) is a signal peptide. At 34-433 (APQDLNPRGR…ACHLETNQRK (400 aa)) the chain is on the extracellular side. 6 EGF-like domains span residues 63–102 (LGDE…ANCD), 114–145 (CKER…ARCE), 140–174 (WGAR…AQCA), 175–204 (SACY…RSCN), 205–233 (NQCA…ARCD), and 228–262 (FGAR…KYCR). Cystine bridges form between Cys-67–Cys-78, Cys-72–Cys-90, Cys-92–Cys-101, Cys-118–Cys-126, Cys-120–Cys-133, Cys-135–Cys-144, Cys-148–Cys-155, Cys-150–Cys-162, Cys-164–Cys-173, Cys-177–Cys-185, Cys-179–Cys-192, Cys-194–Cys-203, Cys-207–Cys-214, Cys-209–Cys-221, Cys-223–Cys-232, Cys-236–Cys-243, Cys-238–Cys-250, and Cys-252–Cys-261. Asn-75 carries N-linked (GlcNAc...) asparagine glycosylation. Asn-302 and Asn-357 each carry an N-linked (GlcNAc...) asparagine glycan. In terms of domain architecture, EGF-like 7 spans 364 to 395 (CAFVCSDCGSGHCDFQSGRCLCSPGVHGPHCN). Cystine bridges form between Cys-368/Cys-376, Cys-371/Cys-383, and Cys-385/Cys-394. The N-linked (GlcNAc...) asparagine glycan is linked to Asn-395. Residues 434–454 (GVMGAGALLTLLLGLLLSLLG) form a helical membrane-spanning segment. The Cytoplasmic portion of the chain corresponds to 455–833 (CCCACRGKDS…SRAGTAPGAS (379 aa)). Phosphoserine occurs at positions 538 and 600. The disordered stretch occupies residues 578–833 (SLEPTGTSTP…SRAGTAPGAS (256 aa)). Position 615 is a phosphotyrosine (Tyr-615). Positions 619-630 (ARREARPARTRN) are enriched in basic and acidic residues. Residues Ser-638, Ser-640, and Ser-695 each carry the phosphoserine modification. Residue Thr-712 is modified to Phosphothreonine. Residues 748-761 (ELRDKTRSLGRAEK) show a composition bias toward basic and acidic residues. Low complexity predominate over residues 781–798 (ASASEASGSEKAAASAPA). The segment covering 804–816 (KKTPIQKPPRKKS) has biased composition (basic residues).

Homophilic and heterophilic interaction via its extracellular domain. Interacts with SCARF1. The heterophilic interaction with SCARF1, which is stronger than the homophilic interaction with itself, is suppressed by the presence of SCARF1 ligand such as Ac-LDL.

The protein localises to the membrane. Functionally, probable adhesion protein, which mediates homophilic and heterophilic interactions. In contrast to SCARF1, it poorly mediates the binding and degradation of acetylated low density lipoprotein (Ac-LDL). This chain is Scavenger receptor class F member 2 (Scarf2), found in Mus musculus (Mouse).